The chain runs to 177 residues: ATP synthase subunit delta, chloroplastic (177 aa).

The protein belongs to the ATPase delta chain family. In terms of assembly, F-type ATPases have 2 components, F(1) - the catalytic core - and F(0) - the membrane proton channel. F(1) has five subunits: alpha(3), beta(3), gamma(1), delta(1), epsilon(1). CF(0) has four main subunits: a(1), b(1), b'(1) and c(10-14). The alpha and beta chains form an alternating ring which encloses part of the gamma chain. F(1) is attached to F(0) by a central stalk formed by the gamma and epsilon chains, while a peripheral stalk is formed by the delta, b and b' chains.

The protein localises to the plastid. The protein resides in the chloroplast thylakoid membrane. F(1)F(0) ATP synthase produces ATP from ADP in the presence of a proton or sodium gradient. F-type ATPases consist of two structural domains, F(1) containing the extramembraneous catalytic core and F(0) containing the membrane proton channel, linked together by a central stalk and a peripheral stalk. During catalysis, ATP synthesis in the catalytic domain of F(1) is coupled via a rotary mechanism of the central stalk subunits to proton translocation. Functionally, this protein is part of the stalk that links CF(0) to CF(1). It either transmits conformational changes from CF(0) to CF(1) or is implicated in proton conduction. The sequence is that of ATP synthase subunit delta, chloroplastic from Galdieria sulphuraria (Red alga).